The primary structure comprises 395 residues: Neuromedin-U receptor 2 (395 aa).

The Extracellular segment spans residues 1–41 (MGKLENASWIHDPLMKYLNSTEEYLAHLCGPKRSDLSLPVS). N-linked (GlcNAc...) asparagine glycans are attached at residues N6 and N19. A helical transmembrane segment spans residues 42-62 (VAYALIFLVGVMGNLLVCMVI). Residues 63-74 (VRHQTLKTPTNY) are Cytoplasmic-facing. A helical transmembrane segment spans residues 75 to 95 (YLFSLAVSDLLVLLLGMPLEI). The Extracellular portion of the chain corresponds to 96 to 115 (YEMWHNYPFLFGPVGCYFKT). An intrachain disulfide couples C111 to C196. Residues 116–138 (ALFETVCFASILSVTTVSVERYV) traverse the membrane as a helical segment. The Cytoplasmic segment spans residues 139-157 (AIVHPFRAKLESTRRRALR). The chain crosses the membrane as a helical span at residues 158–178 (ILSLVWSFSVVFSLPNTSIHG). The Extracellular segment spans residues 179 to 212 (IKFQHFPNGSSVPGSATCTVTKPMWVYNLIIQAT). N-linked (GlcNAc...) asparagine glycosylation occurs at N186. A helical membrane pass occupies residues 213–233 (SFLFYILPMTLISVLYYLMGL). Over 234 to 257 (RLKRDESLEANKVAVNIHRPSRKS) the chain is Cytoplasmic. The chain crosses the membrane as a helical span at residues 258–278 (VTKMLFVLVLVFAICWTPFHV). At 279–293 (DRLFFSFVEEWTESL) the chain is on the extracellular side. Residues 294–314 (AAVFNLIHVVSGVFFYLSSAV) traverse the membrane as a helical segment. Residues 315-395 (NPIIYNLLSR…TTAPCAGEVP (81 aa)) lie on the Cytoplasmic side of the membrane. Positions 374–395 (FPGQSSIHNTNLTTAPCAGEVP) are disordered. The segment covering 375–387 (PGQSSIHNTNLTT) has biased composition (polar residues).

Belongs to the G-protein coupled receptor 1 family. The highest level is detected in the uterus. In the central nervous system, high expression levels were found in the hypothalamus and moderate levels in both the medulla oblongata and spinal cord. Expressed in the hypothalamic paraventricular nucleus (PVN) and suprachiasmatic nuclei (SCN) of the hypothalamus. Expression is low in the gastrointestinal tract. In other peripheral tissues, moderate expression was observed in the lung and ovary.

It is found in the cell membrane. Functionally, receptor for the neuromedin-U and neuromedin-S neuropeptides. In Rattus norvegicus (Rat), this protein is Neuromedin-U receptor 2 (Nmur2).